The chain runs to 295 residues: Pyridoxal 5'-phosphate synthase subunit PdxS (295 aa).

Residue Asp-25 coordinates D-ribose 5-phosphate. Lys-82 acts as the Schiff-base intermediate with D-ribose 5-phosphate in catalysis. Gly-154 lines the D-ribose 5-phosphate pocket. Arg-166 provides a ligand contact to D-glyceraldehyde 3-phosphate. Residues Gly-215 and 236–237 (GS) contribute to the D-ribose 5-phosphate site.

Belongs to the PdxS/SNZ family. In the presence of PdxT, forms a dodecamer of heterodimers.

It carries out the reaction aldehydo-D-ribose 5-phosphate + D-glyceraldehyde 3-phosphate + L-glutamine = pyridoxal 5'-phosphate + L-glutamate + phosphate + 3 H2O + H(+). The protein operates within cofactor biosynthesis; pyridoxal 5'-phosphate biosynthesis. In terms of biological role, catalyzes the formation of pyridoxal 5'-phosphate from ribose 5-phosphate (RBP), glyceraldehyde 3-phosphate (G3P) and ammonia. The ammonia is provided by the PdxT subunit. Can also use ribulose 5-phosphate and dihydroxyacetone phosphate as substrates, resulting from enzyme-catalyzed isomerization of RBP and G3P, respectively. This chain is Pyridoxal 5'-phosphate synthase subunit PdxS, found in Staphylococcus carnosus (strain TM300).